We begin with the raw amino-acid sequence, 74 residues long: Sec-independent protein translocase protein TatA (74 aa).

The helical transmembrane segment at 1-21 (MGGISIWQLLIIVAIIVLLFG) threads the bilayer. The interval 51–74 (ANFDKVEAKESTSTTEKTKEKEQA) is disordered.

It belongs to the TatA/E family. In terms of assembly, the Tat system comprises two distinct complexes: a TatABC complex, containing multiple copies of TatA, TatB and TatC subunits, and a separate TatA complex, containing only TatA subunits. Substrates initially bind to the TatABC complex, which probably triggers association of the separate TatA complex to form the active translocon.

The protein localises to the cell inner membrane. Functionally, part of the twin-arginine translocation (Tat) system that transports large folded proteins containing a characteristic twin-arginine motif in their signal peptide across membranes. TatA could form the protein-conducting channel of the Tat system. The chain is Sec-independent protein translocase protein TatA from Haemophilus ducreyi (strain 35000HP / ATCC 700724).